We begin with the raw amino-acid sequence, 241 residues long: Small ribosomal subunit protein uS2 (241 aa).

This sequence belongs to the universal ribosomal protein uS2 family.

This Hamiltonella defensa subsp. Acyrthosiphon pisum (strain 5AT) protein is Small ribosomal subunit protein uS2.